The sequence spans 139 residues: MSYCRQEGKDKIIFVTKEDHETPSSAELIADDPNDPYEDQGLILPNGDINWNCPCLGGMASGPCGEQFKSAFSCFHYSQEEIKGSDCLDQFRGMQECMQKYPDLYPQEDDEEEAEKEKQNKEAEPSVTQSSDTKEESSS.

3 disulfides stabilise this stretch: Cys-53/Cys-55, Cys-64/Cys-97, and Cys-74/Cys-87. The region spanning Ser-61–Tyr-105 is the CHCH domain. 2 short sequence motifs (cx9C motif) span residues Cys-64–Cys-74 and Cys-87–Cys-97. A disordered region spans residues Asp-103–Ser-139. Positions Glu-115 to Glu-124 are enriched in basic and acidic residues.

Monomer. Can form homooligomers.

The protein resides in the mitochondrion intermembrane space. Central component of a redox-sensitive mitochondrial intermembrane space import machinery which is required for the biogenesis of respiratory chain complexes. Functions as chaperone and catalyzes the formation of disulfide bonds in substrate proteins, such as COX17 or MICU1. Required for the import and folding of small cysteine-containing proteins (small Tim) in the mitochondrial intermembrane space (IMS). Precursor proteins to be imported into the IMS are translocated in their reduced form into the mitochondria. The protein is Mitochondrial intermembrane space import and assembly protein 40-A (chchd4-a) of Xenopus laevis (African clawed frog).